The following is a 201-amino-acid chain: Probable nicotinate-nucleotide adenylyltransferase (201 aa).

It belongs to the NadD family.

It carries out the reaction nicotinate beta-D-ribonucleotide + ATP + H(+) = deamido-NAD(+) + diphosphate. The protein operates within cofactor biosynthesis; NAD(+) biosynthesis; deamido-NAD(+) from nicotinate D-ribonucleotide: step 1/1. Its function is as follows. Catalyzes the reversible adenylation of nicotinate mononucleotide (NaMN) to nicotinic acid adenine dinucleotide (NaAD). The chain is Probable nicotinate-nucleotide adenylyltransferase from Clostridium botulinum (strain Kyoto / Type A2).